The primary structure comprises 59 residues: uncharacterized protein (59 aa).

2 stretches are compositionally biased toward basic and acidic residues: residues 1-23 and 36-45; these read MAEH…DAGR and DPQRASEAGK. Residues 1 to 59 form a disordered region; sequence MAEHRGGSGNFAEDREKASDAGRKGGQHSGGNFKNDPQRASEAGKKGGQQSGGNKSGKS. A compositionally biased stretch (gly residues) spans 46–59; the sequence is KGGQQSGGNKSGKS.

It belongs to the con-10 family.

This is an uncharacterized protein from Escherichia coli (strain K12).